We begin with the raw amino-acid sequence, 474 residues long: Citrate synthase 4, mitochondrial (474 aa).

Residues 1–16 (MVFFRSVSAFTRLRSR) constitute a mitochondrion transit peptide. Active-site residues include His-308, His-354, and Asp-409.

Belongs to the citrate synthase family. Homodimer.

Its subcellular location is the mitochondrion matrix. The enzyme catalyses oxaloacetate + acetyl-CoA + H2O = citrate + CoA + H(+). Its pathway is carbohydrate metabolism; tricarboxylic acid cycle; isocitrate from oxaloacetate: step 1/2. This is Citrate synthase 4, mitochondrial (CSY4) from Arabidopsis thaliana (Mouse-ear cress).